A 34-amino-acid chain; its full sequence is Dermaseptin-H5 (34 aa).

In terms of tissue distribution, expressed by the skin glands.

It localises to the secreted. Functionally, has antimicrobial activity. This is Dermaseptin-H5 from Pithecopus hypochondrialis (Orange-legged leaf frog).